The following is a 427-amino-acid chain: GTPase Obg (427 aa).

One can recognise an Obg domain in the interval 1-158 (MFVDIAKIYV…LWVILELKVL (158 aa)). The OBG-type G domain maps to 159–330 (ADVGLIGYPN…VLKRAYELLK (172 aa)). GTP-binding positions include 165–172 (GYPNVGKS), 190–194 (FTTKY), 212–215 (DIPG), 282–285 (NKMD), and 311–313 (SAA). Residues Ser-172 and Thr-192 each contribute to the Mg(2+) site. Residues 347–427 (FVYYKKKDVK…ILDVEFEYYE (81 aa)) form the OCT domain.

It belongs to the TRAFAC class OBG-HflX-like GTPase superfamily. OBG GTPase family. Monomer. Mg(2+) is required as a cofactor.

The protein localises to the cytoplasm. Its function is as follows. An essential GTPase which binds GTP, GDP and possibly (p)ppGpp with moderate affinity, with high nucleotide exchange rates and a fairly low GTP hydrolysis rate. Plays a role in control of the cell cycle, stress response, ribosome biogenesis and in those bacteria that undergo differentiation, in morphogenesis control. This is GTPase Obg from Caldicellulosiruptor saccharolyticus (strain ATCC 43494 / DSM 8903 / Tp8T 6331).